The primary structure comprises 315 residues: Methionyl-tRNA formyltransferase (315 aa).

113–116 (SLLP) lines the (6S)-5,6,7,8-tetrahydrofolate pocket.

It belongs to the Fmt family.

It carries out the reaction L-methionyl-tRNA(fMet) + (6R)-10-formyltetrahydrofolate = N-formyl-L-methionyl-tRNA(fMet) + (6S)-5,6,7,8-tetrahydrofolate + H(+). Attaches a formyl group to the free amino group of methionyl-tRNA(fMet). The formyl group appears to play a dual role in the initiator identity of N-formylmethionyl-tRNA by promoting its recognition by IF2 and preventing the misappropriation of this tRNA by the elongation apparatus. The chain is Methionyl-tRNA formyltransferase from Salmonella dublin (strain CT_02021853).